The primary structure comprises 350 residues: Flap endonuclease 1 (350 aa).

The segment at 1-101 is N-domain; that stretch reads MGVNIREVIP…LEIERRKRVK (101 aa). Mg(2+)-binding residues include Asp-30, Asp-83, Glu-155, Glu-157, Asp-176, Asp-178, and Asp-239. An I-domain region spans residues 119–261; it reads AARRYAQMAA…TALKMVKAHR (143 aa). Residues 340–348 are interaction with PCNA; sequence QQMGLDAWL.

It belongs to the XPG/RAD2 endonuclease family. FEN1 subfamily. In terms of assembly, interacts with PCNA. PCNA stimulates the nuclease activity without altering cleavage specificity. Mg(2+) serves as cofactor.

In terms of biological role, structure-specific nuclease with 5'-flap endonuclease and 5'-3' exonuclease activities involved in DNA replication and repair. During DNA replication, cleaves the 5'-overhanging flap structure that is generated by displacement synthesis when DNA polymerase encounters the 5'-end of a downstream Okazaki fragment. Binds the unpaired 3'-DNA end and kinks the DNA to facilitate 5' cleavage specificity. Cleaves one nucleotide into the double-stranded DNA from the junction in flap DNA, leaving a nick for ligation. Also involved in the base excision repair (BER) pathway. Acts as a genome stabilization factor that prevents flaps from equilibrating into structures that lead to duplications and deletions. Also possesses 5'-3' exonuclease activity on nicked or gapped double-stranded DNA. In Hyperthermus butylicus (strain DSM 5456 / JCM 9403 / PLM1-5), this protein is Flap endonuclease 1.